A 344-amino-acid polypeptide reads, in one-letter code: Arginine N-succinyltransferase (344 aa).

Leu125 provides a ligand contact to succinyl-CoA. Residue His229 is the Proton donor of the active site.

It belongs to the arginine N-succinyltransferase family.

The catalysed reaction is succinyl-CoA + L-arginine = N(2)-succinyl-L-arginine + CoA + H(+). Its pathway is amino-acid degradation; L-arginine degradation via AST pathway; L-glutamate and succinate from L-arginine: step 1/5. Its function is as follows. Catalyzes the transfer of succinyl-CoA to arginine to produce N(2)-succinylarginine. This Salmonella typhi protein is Arginine N-succinyltransferase.